The sequence spans 429 residues: Ribosomal RNA small subunit methyltransferase B (429 aa).

Residues Cys254 to Lys260, Asp277, Asp303, and Asp322 contribute to the S-adenosyl-L-methionine site. Residue Cys375 is the Nucleophile of the active site.

It belongs to the class I-like SAM-binding methyltransferase superfamily. RsmB/NOP family.

It localises to the cytoplasm. The enzyme catalyses cytidine(967) in 16S rRNA + S-adenosyl-L-methionine = 5-methylcytidine(967) in 16S rRNA + S-adenosyl-L-homocysteine + H(+). Its function is as follows. Specifically methylates the cytosine at position 967 (m5C967) of 16S rRNA. In Escherichia coli (strain SE11), this protein is Ribosomal RNA small subunit methyltransferase B.